Consider the following 196-residue polypeptide: uncharacterized protein (196 aa).

Positions 58 to 163 constitute a Bro-N domain; the sequence is HKFFDAIKDS…IILPNNYHKN (106 aa).

This is an uncharacterized protein from Acanthamoeba polyphaga mimivirus (APMV).